An 82-amino-acid polypeptide reads, in one-letter code: M-zodatoxin-Lt3a (82 aa).

The signal sequence occupies residues 1-22; sequence MKTYAVLLALVVAFVCIAESTG. The propeptide occupies 23 to 61; sequence YPVEDLEDDELTELEAEALLEDLLEDLELEDLDYNEEAR. Residues 58-61 carry the Processing quadruplet motif motif; it reads EEAR. Ala81 carries the alanine amide modification.

Belongs to the cationic peptide 03 (latarcin) family. 03 subfamily. Post-translationally, cleavage of the propeptide depends on the processing quadruplet motif (XXXR, with at least one of X being E). Expressed by the venom gland.

The protein resides in the secreted. It is found in the target cell membrane. It has antimicrobial activity against Gram-positive bacteria (A.globiformis VKM Ac-1112 (MIC=0.3 uM), and B.subtilis VKM B-501 (MIC=1.2 uM)), Gram-negative bacteria (E.coli DH5-alpha (MIC=2.5 uM), E.coli MH1 (MIC=6.0 uM), and P.aeruginosa PAO1 (MIC&gt;40 uM)), and yeasts (P.pastoris GS115 (MIC=20 uM), and S.cerevisiae Y190 (MIC=20 uM)). Causes paralysis, but is not lethal when injected into insect (M.domestica) larvae. A second study reports antibacterial activity against E.coli (MIC=100 uM) and S.aureus (MIC=84 uM). Furthermore, increases efficacy of antibiotics (chloramphenicol, streptomycin, kanamycin, novobiocin) when tested against E.coli, probably by facilitating their incorporation into the bacteria. The chain is M-zodatoxin-Lt3a from Lachesana tarabaevi (Spider).